The sequence spans 416 residues: Glyceraldehyde-3-phosphate dehydrogenase, chloroplastic (416 aa).

A chloroplast-targeting transit peptide spans 1–78; it reads MAFVAPVSSV…APARTSNAPS (78 aa). Residues 90 to 91, Asp-114, and Arg-158 contribute to the NADP(+) site; that span reads RI. Residues 232-234, Thr-263, Arg-278, 291-292, and Arg-314 contribute to the D-glyceraldehyde 3-phosphate site; these read SCT and TG. Cys-233 serves as the catalytic Nucleophile. An NADP(+)-binding site is contributed by Asn-396.

It belongs to the glyceraldehyde-3-phosphate dehydrogenase family. As to quaternary structure, homotetramer.

It is found in the plastid. It localises to the chloroplast. The enzyme catalyses D-glyceraldehyde 3-phosphate + phosphate + NADP(+) = (2R)-3-phospho-glyceroyl phosphate + NADPH + H(+). Its pathway is carbohydrate biosynthesis; Calvin cycle. The polypeptide is Glyceraldehyde-3-phosphate dehydrogenase, chloroplastic (GAPA) (Gracilaria gracilis (Red alga)).